The chain runs to 601 residues: Aspartate--tRNA(Asp/Asn) ligase (601 aa).

E177 contacts L-aspartate. Residues 201-204 are aspartate; sequence QLFK. Position 223 (R223) interacts with L-aspartate. ATP contacts are provided by residues 223-225 and Q232; that span reads RDE. L-aspartate is bound at residue H455. E489 contributes to the ATP binding site. R496 lines the L-aspartate pocket. 541-544 provides a ligand contact to ATP; sequence GWDR. The interval 568-601 is disordered; it reads VDPLTDAPAPIPLEQRRETGVDFKPKKKTDESAV. Positions 581-601 are enriched in basic and acidic residues; that stretch reads EQRRETGVDFKPKKKTDESAV.

This sequence belongs to the class-II aminoacyl-tRNA synthetase family. Type 1 subfamily. Homodimer.

Its subcellular location is the cytoplasm. It carries out the reaction tRNA(Asx) + L-aspartate + ATP = L-aspartyl-tRNA(Asx) + AMP + diphosphate. Its function is as follows. Aspartyl-tRNA synthetase with relaxed tRNA specificity since it is able to aspartylate not only its cognate tRNA(Asp) but also tRNA(Asn). Reaction proceeds in two steps: L-aspartate is first activated by ATP to form Asp-AMP and then transferred to the acceptor end of tRNA(Asp/Asn). This chain is Aspartate--tRNA(Asp/Asn) ligase, found in Corynebacterium diphtheriae (strain ATCC 700971 / NCTC 13129 / Biotype gravis).